The sequence spans 236 residues: Uridylate kinase (236 aa).

Lysine 10–glycine 13 contacts ATP. The segment at glycine 18 to glycine 23 is involved in allosteric activation by GTP. Glycine 52 contacts UMP. 2 residues coordinate ATP: glycine 53 and arginine 57. UMP is bound by residues aspartate 72 and threonine 133 to threonine 140. ATP-binding residues include threonine 160, tyrosine 166, and aspartate 169.

This sequence belongs to the UMP kinase family. In terms of assembly, homohexamer.

Its subcellular location is the cytoplasm. It catalyses the reaction UMP + ATP = UDP + ADP. It functions in the pathway pyrimidine metabolism; CTP biosynthesis via de novo pathway; UDP from UMP (UMPK route): step 1/1. Allosterically activated by GTP. Inhibited by UTP. In terms of biological role, catalyzes the reversible phosphorylation of UMP to UDP. The sequence is that of Uridylate kinase from Chlorobium phaeobacteroides (strain DSM 266 / SMG 266 / 2430).